A 293-amino-acid chain; its full sequence is Putative ribose uptake protein RbsU (293 aa).

10 consecutive transmembrane segments (helical) span residues 2 to 24, 34 to 56, 63 to 80, 95 to 117, 122 to 139, 154 to 171, 180 to 202, 212 to 234, 241 to 263, and 273 to 292; these read SIVA…TVAS, IIGA…SSGF, LFAL…IITF, TTAF…WPGI, IGFT…MTVW, AVVL…YSAA, LTAF…FMNM, ITWL…LISA, LATG…IYFL, and VITI…TVFI.

It belongs to the GRP transporter (TC 2.A.7.5) family.

It localises to the cell membrane. Its function is as follows. Could be involved in the uptake of ribose. This is Putative ribose uptake protein RbsU (rbsU) from Staphylococcus aureus (strain Mu50 / ATCC 700699).